Here is a 178-residue protein sequence, read N- to C-terminus: Caveolin-1 (178 aa).

At S2 the chain carries N-acetylserine. The residue at position 2 (S2) is a Phosphoserine. The interval 2 to 94 is required for homooligomerization; that stretch reads SGGKYVDSEG…WKASFTTFTV (93 aa). Over 2–104 the chain is Cytoplasmic; it reads SGGKYVDSEG…TKYWFYRLLS (103 aa). At K5 the chain carries N6-acetyllysine; alternate. K5 participates in a covalent cross-link: Glycyl lysine isopeptide (Lys-Gly) (interchain with G-Cter in ubiquitin); alternate. Phosphotyrosine is present on Y6. S9 is modified (phosphoserine). Y14 carries the phosphotyrosine; by ABL1 modification. Position 25 is a phosphotyrosine (Y25). Glycyl lysine isopeptide (Lys-Gly) (interchain with G-Cter in ubiquitin) cross-links involve residues K26 and K30. S37 is modified (phosphoserine). Residues K39, K47, and K57 each participate in a glycyl lysine isopeptide (Lys-Gly) (interchain with G-Cter in ubiquitin) cross-link. Positions 82 to 94 are interaction with CAVIN3; the sequence is DGIWKASFTTFTV. The helical intramembrane region spans 105-125; that stretch reads ALFGIPMALIWGIYFAILSFL. At 126–178 the chain is on the cytoplasmic side; that stretch reads HIWAVVPCIKSFLIEIQCISRVYSIYIHTVCDPLFEAIGKIFSNVRISLQKEI. The interacts with SPRY1, SPRY2, SPRY3 and SPRY4 stretch occupies residues 131 to 142; sequence VPCIKSFLIEIQ. 3 S-palmitoyl cysteine lipidation sites follow: C133, C143, and C156. The segment at 149–160 is interacts with SPRY1, SPRY2, and SPRY4; sequence SIYIHTVCDPLF. The segment at 167–178 is interacts with SPRY1, SPRY2, SPRY3 and SPRY4; the sequence is FSNVRISLQKEI.

It belongs to the caveolin family. As to quaternary structure, homooligomer. Interacts with GLIPR2. Interacts with NOSTRIN. Interacts with SNAP25 and STX1A. Interacts (via the N-terminus) with DPP4; the interaction is direct. Interacts with CTNNB1, CDH1 and JUP. Interacts with PACSIN2; this interaction induces membrane tubulation. Interacts with SLC7A9. Interacts with BMX and BTK. Interacts with TGFBR1. Interacts with CAVIN3 (via leucine-zipper domain) in a cholesterol-sensitive manner. Interacts with CAVIN1. Interacts with EHD2 in a cholesterol-dependent manner. Forms a ternary complex with UBXN6 and VCP; mediates CAV1 targeting to lysosomes for degradation. Interacts with ABCG1; this interaction regulates ABCG1-mediated cholesterol efflux. Interacts with NEU3; this interaction enhances NEU3 sialidase activity within caveola. Interacts (via C-terminus) with SPRY1, SPRY2 (via C-terminus), SPRY3, and SPRY4. Interacts with IGFBP5; this interaction allows trafficking of IGFBP5 from the plasma membrane to the nucleus. Phosphorylated at Tyr-14 by ABL1 in response to oxidative stress. In terms of processing, ubiquitinated. Undergo monoubiquitination and multi- and/or polyubiquitination. Monoubiquitination of N-terminal lysines promotes integration in a ternary complex with UBXN6 and VCP which promotes oligomeric CAV1 targeting to lysosomes for degradation. Ubiquitinated by ZNRF1; leading to degradation and modulation of the TLR4-mediated immune response.

The protein localises to the golgi apparatus membrane. It is found in the cell membrane. It localises to the membrane. The protein resides in the caveola. Its subcellular location is the membrane raft. May act as a scaffolding protein within caveolar membranes. Forms a stable heterooligomeric complex with CAV2 that targets to lipid rafts and drives caveolae formation. Mediates the recruitment of CAVIN proteins (CAVIN1/2/3/4) to the caveolae. Interacts directly with G-protein alpha subunits and can functionally regulate their activity. Involved in the costimulatory signal essential for T-cell receptor (TCR)-mediated T-cell activation. Its binding to DPP4 induces T-cell proliferation and NF-kappa-B activation in a T-cell receptor/CD3-dependent manner. Recruits CTNNB1 to caveolar membranes and may regulate CTNNB1-mediated signaling through the Wnt pathway. Negatively regulates TGFB1-mediated activation of SMAD2/3 by mediating the internalization of TGFBR1 from membrane rafts leading to its subsequent degradation. Binds 20(S)-hydroxycholesterol (20(S)-OHC). The protein is Caveolin-1 (CAV1) of Aotus nancymaae (Ma's night monkey).